Consider the following 314-residue polypeptide: Lipoyl synthase (314 aa).

Residues methionine 1–proline 24 are disordered. Positions 53, 58, 64, 79, 83, 86, and 293 each coordinate [4Fe-4S] cluster. A Radical SAM core domain is found at tryptophan 65–leucine 282. Positions histidine 294–glutamine 308 are enriched in basic and acidic residues. The segment at histidine 294 to lysine 314 is disordered.

The protein belongs to the radical SAM superfamily. Lipoyl synthase family. It depends on [4Fe-4S] cluster as a cofactor.

The protein localises to the cytoplasm. The catalysed reaction is [[Fe-S] cluster scaffold protein carrying a second [4Fe-4S](2+) cluster] + N(6)-octanoyl-L-lysyl-[protein] + 2 oxidized [2Fe-2S]-[ferredoxin] + 2 S-adenosyl-L-methionine + 4 H(+) = [[Fe-S] cluster scaffold protein] + N(6)-[(R)-dihydrolipoyl]-L-lysyl-[protein] + 4 Fe(3+) + 2 hydrogen sulfide + 2 5'-deoxyadenosine + 2 L-methionine + 2 reduced [2Fe-2S]-[ferredoxin]. It participates in protein modification; protein lipoylation via endogenous pathway; protein N(6)-(lipoyl)lysine from octanoyl-[acyl-carrier-protein]: step 2/2. Functionally, catalyzes the radical-mediated insertion of two sulfur atoms into the C-6 and C-8 positions of the octanoyl moiety bound to the lipoyl domains of lipoate-dependent enzymes, thereby converting the octanoylated domains into lipoylated derivatives. This chain is Lipoyl synthase, found in Rhodospirillum rubrum (strain ATCC 11170 / ATH 1.1.1 / DSM 467 / LMG 4362 / NCIMB 8255 / S1).